A 584-amino-acid polypeptide reads, in one-letter code: Endoribonuclease YBEY, chloroplastic (584 aa).

The transit peptide at 1-50 directs the protein to the chloroplast; sequence MLSRVCPTLRYNRIWSAHAREMPRATLLLLQPNFFHSSPKTALVNRLDVT. Positions 240, 244, and 250 each coordinate Zn(2+).

The protein belongs to the endoribonuclease YbeY family. The cofactor is Zn(2+).

The protein resides in the plastid. Its subcellular location is the chloroplast stroma. Functionally, endoribonuclease required for chloroplast ribosomal RNA (rRNA) processing and essential for normal growth and development. May be involved in maturation of both the 5' and 3' ends of 16S, 23S, and 4.5S rRNAs. Cleaves chloroplast rRNAs, mRNAs and tRNAs in vitro. This Arabidopsis thaliana (Mouse-ear cress) protein is Endoribonuclease YBEY, chloroplastic.